Here is a 271-residue protein sequence, read N- to C-terminus: Autophagy-related protein 27 (271 aa).

A signal peptide spans M1 to A19. One can recognise an MRH domain in the interval L20–K166. At L20–W199 the chain is on the lumenal side. Disulfide bonds link C22–C60, C71–C78, and C135–C164. The interval P161–A194 is disordered. Residues K166–K189 show a composition bias toward basic and acidic residues. Residues F200–F220 traverse the membrane as a helical segment. Topologically, residues L221–V271 are cytoplasmic.

The protein belongs to the ATG27 family. Forms a complex with ATG9 and ATG23.

Its subcellular location is the cytoplasmic vesicle membrane. The protein resides in the golgi apparatus membrane. It is found in the mitochondrion membrane. It localises to the preautophagosomal structure membrane. Functionally, effector of VPS34 phosphatidylinositol 3-phosphate kinase signaling. Regulates the cytoplasm to vacuole transport (Cvt) vesicle formation. Plays a role in ATG protein retrieval from the pre-autophagosomal structure (PAS) and is especially required for autophagy-dependent cycling of ATG9. This Saccharomyces cerevisiae (strain ATCC 204508 / S288c) (Baker's yeast) protein is Autophagy-related protein 27 (ATG27).